The following is a 236-amino-acid chain: Activating transcription factor of chaperone (236 aa).

Positions H117–K185 are disordered. The segment covering S120–R137 has biased composition (low complexity). The span at R162 to N175 shows a compositional bias: basic and acidic residues. The bZIP domain maps to D165–L228. Residues R167 to K187 are basic motif. The segment at L193–L228 is leucine-zipper.

The protein belongs to the bZIP family. As to quaternary structure, binds DNA as a dimer.

The protein resides in the nucleus. Its function is as follows. Transcriptional activator that acts in the unfolded protein response (UPR) pathway. Acts during endoplasmic reticulum (ER) stress by activating UPR target genes via direct binding to the UPR element (UPRE) (5'-GGAACTGGACAGCGTGTCGAAA-3'). Activates expression of ER chaperones ERP72 and PDI. This chain is Activating transcription factor of chaperone, found in Bombyx mori (Silk moth).